The sequence spans 253 residues: Tetraspanin-11 (253 aa).

Transmembrane regions (helical) follow at residues Leu-19 to Ile-39, Ile-63 to Ile-83, and Tyr-93 to Val-113. The N-linked (GlcNAc...) asparagine glycan is linked to Asn-127. Residues Leu-220–Leu-240 traverse the membrane as a helical segment.

This sequence belongs to the tetraspanin (TM4SF) family.

It is found in the membrane. The polypeptide is Tetraspanin-11 (Tspan11) (Mus musculus (Mouse)).